Consider the following 138-residue polypeptide: Large ribosomal subunit protein uL16 (138 aa).

A compositionally biased stretch (basic residues) spans 1 to 13 (MLQPKRRKYRKEQ). A disordered region spans residues 1-24 (MLQPKRRKYRKEQKGRNTGKATRG).

It belongs to the universal ribosomal protein uL16 family. Part of the 50S ribosomal subunit.

Its function is as follows. Binds 23S rRNA and is also seen to make contacts with the A and possibly P site tRNAs. The protein is Large ribosomal subunit protein uL16 of Burkholderia lata (strain ATCC 17760 / DSM 23089 / LMG 22485 / NCIMB 9086 / R18194 / 383).